A 154-amino-acid chain; its full sequence is Putative nickel-responsive regulator (154 aa).

Residues histidine 95, histidine 106, histidine 108, and cysteine 114 each contribute to the Ni(2+) site.

It belongs to the transcriptional regulatory CopG/NikR family. It depends on Ni(2+) as a cofactor.

Transcriptional regulator. In Caldanaerobacter subterraneus subsp. tengcongensis (strain DSM 15242 / JCM 11007 / NBRC 100824 / MB4) (Thermoanaerobacter tengcongensis), this protein is Putative nickel-responsive regulator.